Reading from the N-terminus, the 747-residue chain is Endoglucanase D (747 aa).

Positions 1–39 (MHSASRTRARTRVRTAVSGLLAATVLAAPLTLVAAPAQA) are cleaved as a signal peptide. The Proton donor role is filled by Glu208. Glu349 functions as the Nucleophile in the catalytic mechanism. A disordered region spans residues 456–475 (APTGLRAGTPTASTVPLTWS). Fibronectin type-III domains are found at residues 456–543 (APTG…TAAG) and 552–639 (VPTG…TAPD). Residues 465–475 (PTASTVPLTWS) are compositionally biased toward polar residues. In terms of domain architecture, CBM2 spans 638-747 (PDPTTGSCAV…TVGGATCTTR (110 aa)).

This sequence belongs to the glycosyl hydrolase 5 (cellulase A) family.

The enzyme catalyses Endohydrolysis of (1-&gt;4)-beta-D-glucosidic linkages in cellulose, lichenin and cereal beta-D-glucans.. It participates in glycan metabolism; cellulose degradation. This is Endoglucanase D (cenD) from Cellulomonas fimi.